Here is a 109-residue protein sequence, read N- to C-terminus: Thioredoxin (109 aa).

In terms of domain architecture, Thioredoxin spans 2–107 (SISQVIDTSF…LLNTLQKHLK (106 aa)). Active-site nucleophile residues include Cys-31 and Cys-34. A disulfide bridge links Cys-31 with Cys-34.

Belongs to the thioredoxin family.

Its subcellular location is the plastid. It is found in the chloroplast. In terms of biological role, participates in various redox reactions through the reversible oxidation of its active center dithiol to a disulfide and catalyzes dithiol-disulfide exchange reactions. The polypeptide is Thioredoxin (trxA) (Griffithsia pacifica (Red alga)).